The following is a 448-amino-acid chain: TRAF family member-associated NF-kappa-B activator (448 aa).

The tract at residues 35–65 is necessary for interaction with ZC3H12A; sequence MDKNIGEQLNRAYEAFRQACMDRDSAVRELQ. Residues 60–98 adopt a coiled-coil conformation; the sequence is AVRELQQKQTENYEQRIREQQEQLSFQQNLIDRLKSQLL. The necessary for interaction with TRAF6 stretch occupies residues 105–224; the sequence is DNSYGYVPLL…QCTDKTEKQE (120 aa). The segment at 166–205 is interaction with TBK1 and IKBKE; that stretch reads HERDNIEKTFWDLKEEFHRICLLAKAQKDHLSKLNIPDIA. The interval 205-224 is TRAF family member interaction; it reads ATDTQCSVPIQCTDKTEKQE. Ser211 is subject to Phosphoserine. The residue at position 246 (Thr246) is a Phosphothreonine. Phosphoserine is present on residues Ser258, Ser261, Ser377, and Ser380. The UBZ1-type zinc-finger motif lies at 416–443; it reads PLVCEFCQELFPPSITSRGDFLRHLNTH. The Zn(2+) site is built by Cys419, Cys422, His439, and His443.

As to quaternary structure, homodimer. Found in a deubiquitination complex with TANK, USP10 and ZC3H12A; this complex inhibits genotoxic stress- or interleukin-1-beta-mediated NF-kappaB activation by promoting IKBKG or TRAF6 deubiquitination. Interacts with IKBKG; this interaction increases in response to DNA damage. Interacts with TRAF6; this interaction increases in response to DNA damage and recruits USP10 to the ubiquitinated TRAF6. Interacts with USP10; this interaction increases in response to DNA damage. Interacts with TBK1 and IKBKE. Also interacts with TRAF1, TRAF2, and TRAF3 by binding to their TRAF-C domains; the interaction with TRAF2 is disrupted by the phosphorylation of TANK by IKBKE. Interacts more strongly with TRAF1 and TRAF2 than TRAF3. Part of a ternary complex consisting of TANK, IKBKB and IKBKG. Interacts with IKBKG; the interaction is enhanced by IKBKE and TBK1. As to expression, heart, brain, spleen, lung, liver, skeletal muscle, kidney and testis.

The protein localises to the cytoplasm. Adapter protein involved in I-kappa-B-kinase (IKK) regulation which constitutively binds TBK1 and IKBKE playing a role in antiviral innate immunity. Acts as a regulator of TRAF function by maintaining them in a latent state. Blocks TRAF2 binding to LMP1 and inhibits LMP1-mediated NF-kappa-B activation. Negatively regulates NF-kappaB signaling and cell survival upon DNA damage. Plays a role as an adapter to assemble ZC3H12A, USP10 in a deubiquitination complex which plays a negative feedback response to attenuate NF-kappaB activation through the deubiquitination of IKBKG or TRAF6 in response to interleukin-1-beta (IL1B) stimulation or upon DNA damage. Promotes UBP10-induced deubiquitination of TRAF6 in response to DNA damage. May control negatively TRAF2-mediated NF-kappa-B activation signaled by CD40, TNFR1 and TNFR2. Essential for the efficient induction of IRF-dependent transcription following infection with Sendai virus. This Mus musculus (Mouse) protein is TRAF family member-associated NF-kappa-B activator (Tank).